The chain runs to 143 residues: Large ribosomal subunit protein uL11 (143 aa).

It belongs to the universal ribosomal protein uL11 family. As to quaternary structure, part of the ribosomal stalk of the 50S ribosomal subunit. Interacts with L10 and the large rRNA to form the base of the stalk. L10 forms an elongated spine to which L12 dimers bind in a sequential fashion forming a multimeric L10(L12)X complex. In terms of processing, one or more lysine residues are methylated.

Functionally, forms part of the ribosomal stalk which helps the ribosome interact with GTP-bound translation factors. The protein is Large ribosomal subunit protein uL11 of Rhizobium etli (strain CIAT 652).